A 157-amino-acid chain; its full sequence is Protein Smg (157 aa).

The protein belongs to the Smg family.

The protein is Protein Smg of Escherichia coli O7:K1 (strain IAI39 / ExPEC).